The following is an 83-amino-acid chain: Putative defensin-like protein 257 (83 aa).

The N-terminal stretch at 1-25 (MMNVSLKLSFLVFILVIMSNLGSEA) is a signal peptide. 3 disulfide bridges follow: C57–C73, C63–C80, and C67–C82.

The protein belongs to the DEFL family.

Its subcellular location is the secreted. This Arabidopsis thaliana (Mouse-ear cress) protein is Putative defensin-like protein 257.